Reading from the N-terminus, the 178-residue chain is RNA-binding protein (178 aa).

Positions 108 to 178 (SGFQKPKIGS…KGKGRRGGKR (71 aa)) are disordered. The span at 168-178 (SKGKGRRGGKR) shows a compositional bias: basic residues.

Belongs to the phytoreovirus RNA-binding protein family.

The protein localises to the host cytoplasm. Constituent of viral factories. Binds to ssRNA and dsRNA. The protein is RNA-binding protein of Wound tumor virus (strain NJ) (WTV).